Consider the following 461-residue polypeptide: Argininosuccinate lyase (461 aa).

It belongs to the lyase 1 family. Argininosuccinate lyase subfamily.

Its subcellular location is the cytoplasm. The catalysed reaction is 2-(N(omega)-L-arginino)succinate = fumarate + L-arginine. It functions in the pathway amino-acid biosynthesis; L-arginine biosynthesis; L-arginine from L-ornithine and carbamoyl phosphate: step 3/3. With respect to regulation, strongly inhibited by L-arginine. Inhibitory effects are lowered at pH 7.0 compared to those at pH 8.0. At 45 degrees Celsius and pH 8.0, activity decreases to 94%, 74% and 37% in the presence of 0.6 mM, 2.8 mM and 10 mM arginine, respectively. Activity also decreases to 86% in the presence of 10 mM sodium succinate or sodium citrate. Activity does not decrease in the presence of 1 mM or 10 mM L-lysine, which has a similar structure to arginine. Its function is as follows. Catalyzes the last step of arginine biosynthesis, the conversion of argininosuccinate into L-arginine and fumarate. This chain is Argininosuccinate lyase, found in Synechocystis sp. (strain ATCC 27184 / PCC 6803 / Kazusa).